Consider the following 372-residue polypeptide: GDP-mannose transporter GONST3 (372 aa).

10 helical membrane passes run 33–53 (ASVYGVAAGYCLSASLLSIIN), 60–80 (FPYPGALTAMQYFTSAAGVLL), 92–112 (LNLLTMWRFLPAAMIFYLSLF), 125–145 (TFIVFRSAVPIFVAIGETLFL), 155–175 (WGSLATIFGGSLLYVFTDYQF), 177–197 (IAAYSWALAYLVSMTIDFVYI), 209–229 (WGLVLYNNLEALLLFPLELLI), 251–271 (VVLPVGLSCLFGLAISFFGFS), 280–300 (GFTVLGIVNKLLTVVINLMVW), and 303–323 (HSTFVGTLGLLVCMFGGVMYQ). The segment at 331–372 (NATQEAKPQEQDEEQEKLLEMQENKESNSVDIKETLKSEEKL) is disordered. The span at 346–372 (EKLLEMQENKESNSVDIKETLKSEEKL) shows a compositional bias: basic and acidic residues.

The protein belongs to the nucleotide-sugar transporter family. GDP-Mannose:GMP antiporter (GMA) (TC 2.A.7.13) subfamily. In terms of tissue distribution, expressed in rosette leaves, stems, flowers and siliques.

The protein resides in the golgi apparatus membrane. GDP-mannose transporter that may be involved in the import of GDP-mannose from the cytoplasm into the Golgi lumen. This is GDP-mannose transporter GONST3 from Arabidopsis thaliana (Mouse-ear cress).